A 135-amino-acid polypeptide reads, in one-letter code: Probable disulfide formation protein (135 aa).

The chain crosses the membrane as a helical span at residues S7–Y26. A disulfide bridge links C36 with C39. The next 2 membrane-spanning stretches (helical) occupy residues Y41–E60 and Y67–C84. Residues C96 and C101 are joined by a disulfide bond. A helical transmembrane segment spans residues G109–A131.

This sequence belongs to the DsbB family. BdbC subfamily.

The protein localises to the cell inner membrane. Required for disulfide bond formation in some proteins. This chain is Probable disulfide formation protein, found in Chlamydia trachomatis serovar D (strain ATCC VR-885 / DSM 19411 / UW-3/Cx).